Consider the following 144-residue polypeptide: 3-hydroxyacyl-[acyl-carrier-protein] dehydratase FabZ (144 aa).

His52 is a catalytic residue.

It belongs to the thioester dehydratase family. FabZ subfamily.

The protein localises to the cytoplasm. The enzyme catalyses a (3R)-hydroxyacyl-[ACP] = a (2E)-enoyl-[ACP] + H2O. Involved in unsaturated fatty acids biosynthesis. Catalyzes the dehydration of short chain beta-hydroxyacyl-ACPs and long chain saturated and unsaturated beta-hydroxyacyl-ACPs. The polypeptide is 3-hydroxyacyl-[acyl-carrier-protein] dehydratase FabZ (Syntrophomonas wolfei subsp. wolfei (strain DSM 2245B / Goettingen)).